Reading from the N-terminus, the 321-residue chain is Glucokinase (321 aa).

ATP is bound at residue 8 to 13 (GDVGGT).

The protein belongs to the bacterial glucokinase family.

It localises to the cytoplasm. It carries out the reaction D-glucose + ATP = D-glucose 6-phosphate + ADP + H(+). This chain is Glucokinase, found in Enterobacter sp. (strain 638).